Consider the following 600-residue polypeptide: Pescadillo homolog (600 aa).

The BRCT domain occupies 351-450; that stretch reads PTSTLLSKFI…ELLPVSQYAP (100 aa). The tract at residues 454-600 is disordered; that stretch reads LPPHLSPWGD…AELGKLNKKN (147 aa). Residues 478-509 are compositionally biased toward acidic residues; sequence QGEEEEEEEEEIEGDEIEEDVEEEDEEEDEDL. Residues 478 to 600 adopt a coiled-coil conformation; the sequence is QGEEEEEEEE…AELGKLNKKN (123 aa). A compositionally biased stretch (basic residues) spans 530-539; the sequence is KDKKSSKGKK. 2 stretches are compositionally biased toward basic and acidic residues: residues 569–580 and 588–600; these read IDKKEARQDDLT and KTKAELGKLNKKN.

The protein belongs to the pescadillo family. Component of the NOP7 complex, composed of ERB1, NOP7 and YTM1. The complex is held together by ERB1, which interacts with NOP7 via its N-terminal domain and with YTM1 via a high-affinity interaction between the seven-bladed beta-propeller domains of the 2 proteins. The NOP7 complex associates with the 66S pre-ribosome.

It localises to the nucleus. The protein resides in the nucleolus. Its subcellular location is the nucleoplasm. Component of the NOP7 complex, which is required for maturation of the 25S and 5.8S ribosomal RNAs and formation of the 60S ribosome. In Debaryomyces hansenii (strain ATCC 36239 / CBS 767 / BCRC 21394 / JCM 1990 / NBRC 0083 / IGC 2968) (Yeast), this protein is Pescadillo homolog.